The sequence spans 148 residues: HTH-type transcriptional regulator SarZ (148 aa).

The region spanning 9–139 (SKQLCFLFYV…IINNLRNFVS (131 aa)) is the HTH marR-type domain. The segment at residues 55-78 (IKKLGERVFLDSGTLTPLLKKLEK) is a DNA-binding region (H-T-H motif).

It belongs to the SarZ family.

Its subcellular location is the cytoplasm. In terms of biological role, activates transcription of virulence factors alpha- and beta hemolysin genes (hla and hlb). Also, activates RNAIII expression, a central regulator transcribed from the agr locus. The polypeptide is HTH-type transcriptional regulator SarZ (sarZ) (Staphylococcus aureus (strain USA300)).